The chain runs to 370 residues: Anhydro-N-acetylmuramic acid kinase (370 aa).

13 to 20 provides a ligand contact to ATP; sequence GTSMDGVD.

It belongs to the anhydro-N-acetylmuramic acid kinase family.

The catalysed reaction is 1,6-anhydro-N-acetyl-beta-muramate + ATP + H2O = N-acetyl-D-muramate 6-phosphate + ADP + H(+). It functions in the pathway amino-sugar metabolism; 1,6-anhydro-N-acetylmuramate degradation. Its pathway is cell wall biogenesis; peptidoglycan recycling. In terms of biological role, catalyzes the specific phosphorylation of 1,6-anhydro-N-acetylmuramic acid (anhMurNAc) with the simultaneous cleavage of the 1,6-anhydro ring, generating MurNAc-6-P. Is required for the utilization of anhMurNAc either imported from the medium or derived from its own cell wall murein, and thus plays a role in cell wall recycling. In Shewanella denitrificans (strain OS217 / ATCC BAA-1090 / DSM 15013), this protein is Anhydro-N-acetylmuramic acid kinase.